The following is a 499-amino-acid chain: Serine carboxypeptidase 1 (499 aa).

An N-terminal signal peptide occupies residues 1–30; the sequence is MARCRRRSGCTAGAALLLLLALALSGGGGA. 3 disulfide bridges follow: Cys-92–Cys-388, Cys-256–Cys-268, and Cys-291–Cys-355. The N-linked (GlcNAc...) asparagine glycan is linked to Asn-148. Ser-188 is an active-site residue. Residue Asn-262 is glycosylated (N-linked (GlcNAc...) asparagine). A propeptide spans 297–351 (linker peptide); sequence IKEVNLQNSKLPQSFKDLGTTNKPFPVRTRMLGRAWPLRAPVKAGRVPSWQEVAS. Residue Asn-407 is glycosylated (N-linked (GlcNAc...) asparagine). Active-site residues include Asp-423 and His-476. Residues 497-499 carry the Microbody targeting signal motif; sequence SKL.

It belongs to the peptidase S10 family. Carboxypeptidase I is a dimer, where each monomer is composed of two chains linked by disulfide bonds. The linker peptide is endoproteolytically excised during enzyme maturation.

It is found in the secreted. The enzyme catalyses Release of a C-terminal amino acid with broad specificity.. May be involved in the degradation of small peptides (2-5 residues) or in the degradation of storage proteins in the embryo. In Hordeum vulgare (Barley), this protein is Serine carboxypeptidase 1 (CBP1).